The chain runs to 663 residues: Ras and EF-hand domain-containing protein (663 aa).

2 EF-hand domains span residues 1–33 (MNHA…CREL) and 35–70 (VPAD…VSEA). Ca(2+) is bound by residues aspartate 14, asparagine 16, serine 18, arginine 20, aspartate 25, aspartate 48, aspartate 50, aspartate 52, tyrosine 54, and aspartate 59. Residues 122–297 (ELLLQQFEDL…LKKMVMEFQS (176 aa)) are a coiled coil. Over residues 324-336 (SQENASTKRQLSP) the composition is skewed to polar residues. A disordered region spans residues 324 to 343 (SQENASTKRQLSPRNEVLPR). Residues 477–482 (GSGKSS), 580–583 (NKVD), and 615–616 (AK) each bind GTP.

The protein belongs to the small GTPase superfamily. Rab family. In terms of assembly, homodimer.

It localises to the cytoplasm. The protein resides in the perinuclear region. Its function is as follows. Binds predominantly GDP, and also GTP. The polypeptide is Ras and EF-hand domain-containing protein (rasef) (Danio rerio (Zebrafish)).